Reading from the N-terminus, the 186-residue chain is Thiol:disulfide interchange protein CycY (186 aa).

The N-terminal stretch at methionine 1 to glycine 20 is a signal peptide. One can recognise a Thioredoxin domain in the interval aspartate 47–glycine 182. Cysteine 80 and cysteine 83 form a disulfide bridge.

The protein belongs to the thioredoxin family. DsbE subfamily.

The protein resides in the periplasm. Its function is as follows. Required for disulfide bond formation in some periplasmic proteins. Also acts as a disulfide oxidoreductase in cytochromes c biogenesis. The cysteines of apocytochromes c must be in the reduced state for covalent linkage between the two moieties to occur. This Rhizobium leguminosarum bv. viciae protein is Thiol:disulfide interchange protein CycY (cycY).